Reading from the N-terminus, the 243-residue chain is Small ribosomal subunit protein uS2c (243 aa).

Belongs to the universal ribosomal protein uS2 family.

The protein resides in the plastid. Its subcellular location is the chloroplast. The chain is Small ribosomal subunit protein uS2c (rps2) from Cyanidium caldarium (Red alga).